Reading from the N-terminus, the 171-residue chain is Neuronal vesicle trafficking-associated protein 2 (171 aa).

Residues 1–10 (MVKLNSNPSE) show a composition bias toward polar residues. Residues 1–21 (MVKLNSNPSEKGTKPPSVEDG) are disordered. Topologically, residues 1–71 (MVKLNSNPSE…FRVPKIAEFT (71 aa)) are cytoplasmic. The helical; Signal-anchor for type II membrane protein transmembrane segment at 72 to 92 (VTILVSLALAFLACIVFLVVY) threads the bilayer. Topologically, residues 93–171 (KAFTYDHSCP…EPKPPKTQGH (79 aa)) are lumenal.

Belongs to the NSG family.

The protein resides in the membrane. It localises to the golgi apparatus. It is found in the trans-Golgi network membrane. Its subcellular location is the cell projection. The protein localises to the dendrite. The protein resides in the endosome membrane. It localises to the early endosome membrane. It is found in the late endosome membrane. Its subcellular location is the lysosome lumen. The protein localises to the cytoplasmic vesicle membrane. The protein resides in the golgi stack membrane. It localises to the endosome. It is found in the multivesicular body membrane. The polypeptide is Neuronal vesicle trafficking-associated protein 2 (Homo sapiens (Human)).